The primary structure comprises 146 residues: Large ribosomal subunit protein uL15 (146 aa).

A compositionally biased stretch (basic and acidic residues) spans 1-13; it reads MKLHELHSAEGSR. The segment at 1–55 is disordered; sequence MKLHELHSAEGSRRNRKRVGRGTSSGYGKTSGRGQKGQLARQGGHTRLGFEGGQM. The span at 23–35 shows a compositional bias: gly residues; sequence TSSGYGKTSGRGQ.

It belongs to the universal ribosomal protein uL15 family. Part of the 50S ribosomal subunit.

Functionally, binds to the 23S rRNA. This chain is Large ribosomal subunit protein uL15, found in Lactobacillus acidophilus (strain ATCC 700396 / NCK56 / N2 / NCFM).